The following is a 250-amino-acid chain: uncharacterized protein (250 aa).

It to class-3 of adenylyl cyclases.

This is an uncharacterized protein from Mycobacterium tuberculosis (strain ATCC 25618 / H37Rv).